The primary structure comprises 776 residues: Endonuclease MutS2 (776 aa).

Position 330 to 337 (330 to 337 (GPNTGGKT)) interacts with ATP. The Smr domain occupies 701–776 (LDLRGMRYEE…GSGATIAILK (76 aa)).

Belongs to the DNA mismatch repair MutS family. MutS2 subfamily. Homodimer. Binds to stalled ribosomes, contacting rRNA.

Endonuclease that is involved in the suppression of homologous recombination and thus may have a key role in the control of bacterial genetic diversity. In terms of biological role, acts as a ribosome collision sensor, splitting the ribosome into its 2 subunits. Detects stalled/collided 70S ribosomes which it binds and splits by an ATP-hydrolysis driven conformational change. Acts upstream of the ribosome quality control system (RQC), a ribosome-associated complex that mediates the extraction of incompletely synthesized nascent chains from stalled ribosomes and their subsequent degradation. Probably generates substrates for RQC. The polypeptide is Endonuclease MutS2 (Lactococcus lactis subsp. cremoris (strain MG1363)).